Here is a 726-residue protein sequence, read N- to C-terminus: Pyrroloquinoline quinone-dependent pyranose dehydrogenase (726 aa).

An N-terminal signal peptide occupies residues 1 to 18 (MRSSSLAWALGLVALANA). Residues methionine 83 and tyrosine 108 each contribute to the heme b site. Residues cysteine 138 and cysteine 141 are joined by a disulfide bond. Asparagine 140 is a glycosylation site (N-linked (GlcNAc...) asparagine). Positions 181 and 182 each coordinate heme b. Residues 211-242 (PPLSGGAPTQPPTQQPPTTTAPPPPPPSSTFV) form a disordered region. Residues 219–238 (TQPPTQQPPTTTAPPPPPPS) are compositionally biased toward pro residues. A disulfide bridge links cysteine 244 with cysteine 302. Residues arginine 273, histidine 363, arginine 430, and asparagine 431 each contribute to the pyrroloquinoline quinone site. Residues serine 449 and aspartate 451 each coordinate Ca(2+). A disulfide bridge links cysteine 492 with cysteine 525. Histidine 539 is a binding site for pyrroloquinoline quinone. The N-linked (GlcNAc...) asparagine glycan is linked to asparagine 551. Pyrroloquinoline quinone-binding residues include histidine 560, tryptophan 563, and asparagine 564. A disulfide bridge connects residues cysteine 611 and cysteine 619. Arginine 621 contacts pyrroloquinoline quinone. Over residues 659–678 (ITQPPITTSPPTPTTPPVVQ) the composition is skewed to pro residues. The disordered stretch occupies residues 659–689 (ITQPPITTSPPTPTTPPVVQPPTTVAPPQAS). A compositionally biased stretch (low complexity) spans 679–689 (PPTTVAPPQAS). The 37-residue stretch at 688 to 724 (ASQTLWGQCGGQGWTGPTLCPANSVCRESNQWYSQCV) folds into the CBM1 domain.

This sequence belongs to the sugar dehydrogenase AA12 family. Ca(2+) is required as a cofactor. Requires pyrroloquinoline quinone as cofactor. Heme b serves as cofactor.

The protein localises to the secreted. Functionally, pyrroloquinoline quinone (PPQ)-dependent oxidoreductase that catalyzes the oxidation of various sugars including L-galactose, L-gulose, D-talose, D-arabinose, D-lyxose, L-fucose and D-glucosone. Shows significant activity toward the reverse-chair conformation of pyranoses. Shows little or no activity toward abundant sugars such as D-glucose, D-fructose, cellobiose, as well L-xylose and L-glucose. This enzyme is able to direct electrical communication with electrodes, without artificial electron mediators, thus allowing direct electron transfer (DET)-type bioelectrocatalysis. Exhibits binding affinity for insoluble cellulose. PDH does not oxidize cello-oligosaccharides but is able to activate the C-1-oxidizing Neurospora crassa LPMO9F and the C-4-oxidizing Neurospora crassa LPMO9C thanks to the electron-tranfer activity of the cytochrome domain and the localization of PDH in the vicinity of the LPMO substrates by the CBM1 domain. The chain is Pyrroloquinoline quinone-dependent pyranose dehydrogenase from Coprinopsis cinerea (strain Okayama-7 / 130 / ATCC MYA-4618 / FGSC 9003) (Inky cap fungus).